The chain runs to 116 residues: Putative iron-sulfur cluster insertion protein ErpA (116 aa).

The iron-sulfur cluster site is built by cysteine 44, cysteine 108, and cysteine 110.

This sequence belongs to the HesB/IscA family. In terms of assembly, homodimer. It depends on iron-sulfur cluster as a cofactor.

Functionally, required for insertion of 4Fe-4S clusters. This Aromatoleum aromaticum (strain DSM 19018 / LMG 30748 / EbN1) (Azoarcus sp. (strain EbN1)) protein is Putative iron-sulfur cluster insertion protein ErpA.